The sequence spans 276 residues: NH(3)-dependent NAD(+) synthetase (276 aa).

Residue 43–50 (GISGGVDS) participates in ATP binding. Asp-49 is a binding site for Mg(2+). Position 146 (Arg-146) interacts with deamido-NAD(+). Thr-166 provides a ligand contact to ATP. Glu-171 serves as a coordination point for Mg(2+). Deamido-NAD(+) is bound by residues Lys-179 and Asp-186. Positions 195 and 217 each coordinate ATP. Residue 266 to 267 (HK) participates in deamido-NAD(+) binding.

Belongs to the NAD synthetase family. As to quaternary structure, homodimer.

The catalysed reaction is deamido-NAD(+) + NH4(+) + ATP = AMP + diphosphate + NAD(+) + H(+). The protein operates within cofactor biosynthesis; NAD(+) biosynthesis; NAD(+) from deamido-NAD(+) (ammonia route): step 1/1. In terms of biological role, catalyzes the ATP-dependent amidation of deamido-NAD to form NAD. Uses ammonia as a nitrogen source. This Vibrio cholerae serotype O1 (strain ATCC 39541 / Classical Ogawa 395 / O395) protein is NH(3)-dependent NAD(+) synthetase.